We begin with the raw amino-acid sequence, 1399 residues long: DNA-directed RNA polymerase subunit beta' (1399 aa).

Positions 71, 73, 86, and 89 each coordinate Zn(2+). Residues Asp-462, Asp-464, and Asp-466 each coordinate Mg(2+). Cys-810, Cys-884, Cys-891, and Cys-894 together coordinate Zn(2+).

It belongs to the RNA polymerase beta' chain family. In terms of assembly, the RNAP catalytic core consists of 2 alpha, 1 beta, 1 beta' and 1 omega subunit. When a sigma factor is associated with the core the holoenzyme is formed, which can initiate transcription. Mg(2+) serves as cofactor. Requires Zn(2+) as cofactor.

The catalysed reaction is RNA(n) + a ribonucleoside 5'-triphosphate = RNA(n+1) + diphosphate. Its function is as follows. DNA-dependent RNA polymerase catalyzes the transcription of DNA into RNA using the four ribonucleoside triphosphates as substrates. The sequence is that of DNA-directed RNA polymerase subunit beta' from Nitrobacter winogradskyi (strain ATCC 25391 / DSM 10237 / CIP 104748 / NCIMB 11846 / Nb-255).